The sequence spans 511 residues: UDP-N-acetylmuramoyl-L-alanyl-D-glutamate--2,6-diaminopimelate ligase (511 aa).

Ser30 contributes to the UDP-N-acetyl-alpha-D-muramoyl-L-alanyl-D-glutamate binding site. 110–116 contacts ATP; it reads GTNGKTT. Residues 152-153, Ser179, Gln185, and Arg187 each bind UDP-N-acetyl-alpha-D-muramoyl-L-alanyl-D-glutamate; that span reads TT. Lys219 carries the N6-carboxylysine modification. Meso-2,6-diaminopimelate-binding positions include Arg385, 409 to 412, Gly476, and Glu480; that span reads DNPR. The Meso-diaminopimelate recognition motif signature appears at 409-412; it reads DNPR.

Belongs to the MurCDEF family. MurE subfamily. It depends on Mg(2+) as a cofactor. In terms of processing, carboxylation is probably crucial for Mg(2+) binding and, consequently, for the gamma-phosphate positioning of ATP.

It is found in the cytoplasm. It carries out the reaction UDP-N-acetyl-alpha-D-muramoyl-L-alanyl-D-glutamate + meso-2,6-diaminopimelate + ATP = UDP-N-acetyl-alpha-D-muramoyl-L-alanyl-gamma-D-glutamyl-meso-2,6-diaminopimelate + ADP + phosphate + H(+). It participates in cell wall biogenesis; peptidoglycan biosynthesis. Its function is as follows. Catalyzes the addition of meso-diaminopimelic acid to the nucleotide precursor UDP-N-acetylmuramoyl-L-alanyl-D-glutamate (UMAG) in the biosynthesis of bacterial cell-wall peptidoglycan. The protein is UDP-N-acetylmuramoyl-L-alanyl-D-glutamate--2,6-diaminopimelate ligase of Geobacter metallireducens (strain ATCC 53774 / DSM 7210 / GS-15).